Consider the following 141-residue polypeptide: Hemoglobin subunit alpha-A (141 aa).

In terms of domain architecture, Globin spans 1 to 141 (MLSASDKANV…VGLVLTAKYR (141 aa)). Residue His-58 participates in O2 binding. His-87 provides a ligand contact to heme b.

It belongs to the globin family. In terms of assembly, there are three forms of hemoglobin in Sphenodon: A, A' and D. Hb A is a tetramer of two alpha-A and two beta-1, Hb A' is a tetramer of two alpha-a and two beta-2, Hb D is a tetramer of two alpha-D and two beta-2. In terms of tissue distribution, red blood cells.

Involved in oxygen transport from the lung to the various peripheral tissues. This Sphenodon punctatus (Tuatara) protein is Hemoglobin subunit alpha-A (HBAA).